Reading from the N-terminus, the 899-residue chain is Protein translocase subunit SecA (899 aa).

Residues Gln-87, 105–109, and Asp-516 contribute to the ATP site; that span reads GEGKT. The Zn(2+) site is built by Cys-884, Cys-886, Cys-895, and His-896.

This sequence belongs to the SecA family. Monomer and homodimer. Part of the essential Sec protein translocation apparatus which comprises SecA, SecYEG and auxiliary proteins SecDF. Other proteins may also be involved. The cofactor is Zn(2+).

It localises to the cell inner membrane. Its subcellular location is the cytoplasm. The catalysed reaction is ATP + H2O + cellular proteinSide 1 = ADP + phosphate + cellular proteinSide 2.. Its function is as follows. Part of the Sec protein translocase complex. Interacts with the SecYEG preprotein conducting channel. Has a central role in coupling the hydrolysis of ATP to the transfer of proteins into and across the cell membrane, serving as an ATP-driven molecular motor driving the stepwise translocation of polypeptide chains across the membrane. The polypeptide is Protein translocase subunit SecA (Borreliella afzelii (strain PKo) (Borrelia afzelii)).